Here is a 445-residue protein sequence, read N- to C-terminus: Ubiquitin carboxyl-terminal hydrolase MINDY-3 (445 aa).

The Nucleophile role is filled by Cys51. A Phosphoserine modification is found at Ser125. Catalysis depends on His287, which acts as the Proton acceptor.

Belongs to the MINDY deubiquitinase family. FAM188 subfamily. Interacts with COPS5.

The protein localises to the nucleus. The catalysed reaction is Thiol-dependent hydrolysis of ester, thioester, amide, peptide and isopeptide bonds formed by the C-terminal Gly of ubiquitin (a 76-residue protein attached to proteins as an intracellular targeting signal).. Its function is as follows. Hydrolase that can remove 'Lys-48'-linked conjugated ubiquitin from proteins. This is Ubiquitin carboxyl-terminal hydrolase MINDY-3 (MINDY3) from Bos taurus (Bovine).